The primary structure comprises 253 residues: Sec-independent protein translocase protein TatC (253 aa).

6 consecutive transmembrane segments (helical) span residues 18–38 (VSVGTILVAFLGCFHFWKSIF), 69–89 (AIVISMPIIFWQLWLFIAPGL), 96–116 (VILPFVFFGSGMFLIGAAFSY), 151–171 (LILGFGVAFELPVLAYFLAKV), 187–207 (IVVIFIVAAIITPPDVVSQIF), and 208–228 (MALPLVGLYGLSILIAKMVNP). The segment at 231-253 (KDNENNNENNNENNTKENTKSES) is disordered. Residues 244–253 (NTKENTKSES) show a composition bias toward basic and acidic residues.

The protein belongs to the TatC family. The Tat system comprises two distinct complexes: a TatABC complex, containing multiple copies of TatA, TatB and TatC subunits, and a separate TatA complex, containing only TatA subunits. Substrates initially bind to the TatABC complex, which probably triggers association of the separate TatA complex to form the active translocon.

The protein resides in the cell inner membrane. Part of the twin-arginine translocation (Tat) system that transports large folded proteins containing a characteristic twin-arginine motif in their signal peptide across membranes. Together with TatB, TatC is part of a receptor directly interacting with Tat signal peptides. The protein is Sec-independent protein translocase protein TatC of Helicobacter pylori (strain ATCC 700392 / 26695) (Campylobacter pylori).